Reading from the N-terminus, the 193-residue chain is Ribonuclease HII (193 aa).

Residues 15–193 (CIVAGIDEAG…PYHRRSFRCC (179 aa)) form the RNase H type-2 domain. 3 residues coordinate a divalent metal cation: aspartate 21, glutamate 22, and aspartate 112.

It belongs to the RNase HII family. The cofactor is Mn(2+). It depends on Mg(2+) as a cofactor.

The protein localises to the cytoplasm. The catalysed reaction is Endonucleolytic cleavage to 5'-phosphomonoester.. Its function is as follows. Endonuclease that specifically degrades the RNA of RNA-DNA hybrids. The chain is Ribonuclease HII from Rickettsia conorii (strain ATCC VR-613 / Malish 7).